The primary structure comprises 132 residues: Agouti-signaling protein (132 aa).

Positions 1–22 (MDVTRLLLATLLVFLCFFTVYS) are cleaved as a signal peptide. An N-linked (GlcNAc...) asparagine glycan is attached at Asn-39. The tract at residues 62–88 (ISRKEAEKKRSSKKEASMKKVAQPRTP) is disordered. A compositionally biased stretch (basic and acidic residues) spans 63–79 (SRKEAEKKRSSKKEASM). Disulfide bonds link Cys-93–Cys-108, Cys-100–Cys-114, Cys-107–Cys-125, Cys-111–Cys-132, and Cys-116–Cys-123. One can recognise an Agouti domain in the interval 93-132 (CVATRYSCKPPAPACCDPCASCQCRFFRSACSCRVLRLNC).

Its subcellular location is the secreted. Involved in the regulation of melanogenesis. The binding of ASP to MC1R precludes alpha-MSH initiated signaling and thus blocks production of cAMP, leading to a down-regulation of eumelanogenesis (brown/black pigment) and thus increasing synthesis of pheomelanin (yellow/red pigment). In Semnopithecus entellus (Northern plains gray langur), this protein is Agouti-signaling protein (ASIP).